We begin with the raw amino-acid sequence, 858 residues long: GDP-fucose protein O-fucosyltransferase 2 (858 aa).

Topologically, residues 1 to 150 (MHCQLGGQAR…RPPCLLNHRR (150 aa)) are cytoplasmic. A helical; Signal-anchor for type II membrane protein transmembrane segment spans residues 151-171 (LLLGLVSVLTVFLSCLPFTNA). The Lumenal portion of the chain corresponds to 172 to 858 (TVSPAALQDV…WPSLDPSSTL (687 aa)). 237 to 241 (GEGFH) contributes to the GDP-beta-L-fucose binding site. The Proton acceptor role is filled by glutamate 238. Residues 448 to 510 (AALTPQERQR…SRSRKEIQEE (63 aa)) form a disordered region. Residues 486–510 (DGEREKRKPGRRSDTSRSRKEIQEE) show a composition bias toward basic and acidic residues. Residues 646–648 (HLR) and 787–788 (RF) contribute to the GDP-beta-L-fucose site. Residues 819–858 (TGGQAQGKCFATKSHDPPEGRSRSELRRKYWPSLDPSSTL) are disordered. The segment covering 831–846 (KSHDPPEGRSRSELRR) has biased composition (basic and acidic residues).

Belongs to the glycosyltransferase 68 family.

It is found in the endoplasmic reticulum membrane. The catalysed reaction is L-seryl-[protein] + GDP-beta-L-fucose = 3-O-(alpha-L-fucosyl)-L-seryl-[protein] + GDP + H(+). It catalyses the reaction L-threonyl-[protein] + GDP-beta-L-fucose = 3-O-(alpha-L-fucosyl)-L-threonyl-[protein] + GDP + H(+). It participates in protein modification; protein glycosylation. Functionally, catalyzes the reaction that attaches fucose through an O-glycosidic linkage to a conserved serine or threonine residue in the consensus sequence C1-X-X-S/T-C2 of thrombospondin type I repeats (TSRs) where C1 and C2 are the first and second cysteines of the repeat, respectively. O-fucosylates microneme protein MIC2 and may play a role in its stabilization. Probably by regulating protein O-fucosylation, may play a role in tachyzoite adhesion to and/or invasion of host cells; however, POFUT2 involvement in adhesion/invasion is controversial. The sequence is that of GDP-fucose protein O-fucosyltransferase 2 from Toxoplasma gondii (strain ATCC 50853 / GT1).